A 726-amino-acid polypeptide reads, in one-letter code: Catalase-peroxidase (726 aa).

Residues 1 to 25 (MDAKTDDSAGKCPFTGGGRRGHRNR) form a disordered region. A cross-link (tryptophyl-tyrosyl-methioninium (Trp-Tyr) (with M-244)) is located at residues 96 to 218 (WHSAGTYRIT…LAAVQMGLIY (123 aa)). Catalysis depends on H97, which acts as the Proton acceptor. Positions 218 to 244 (YVNPEGPNGNPDPVAAAKDIRETFYRM) form a cross-link, tryptophyl-tyrosyl-methioninium (Tyr-Met) (with W-96). H259 contacts heme b.

This sequence belongs to the peroxidase family. Peroxidase/catalase subfamily. Homodimer or homotetramer. Heme b serves as cofactor. In terms of processing, formation of the three residue Trp-Tyr-Met cross-link is important for the catalase, but not the peroxidase activity of the enzyme.

The catalysed reaction is H2O2 + AH2 = A + 2 H2O. It carries out the reaction 2 H2O2 = O2 + 2 H2O. Its function is as follows. Bifunctional enzyme with both catalase and broad-spectrum peroxidase activity. In Chelativorans sp. (strain BNC1), this protein is Catalase-peroxidase.